We begin with the raw amino-acid sequence, 240 residues long: Small ribosomal subunit protein uS3 (240 aa).

The KH type-2 domain maps to 39–107; that stretch reads IRDFIKKEAK…ELHLNIVEVR (69 aa). Composition is skewed to basic and acidic residues over residues 212 to 221 and 231 to 240; these read PQARDRRATE and PRRDRDRDAR. Residues 212 to 240 form a disordered region; it reads PQARDRRATEAQDGPSPRGPRRDRDRDAR.

This sequence belongs to the universal ribosomal protein uS3 family. In terms of assembly, part of the 30S ribosomal subunit. Forms a tight complex with proteins S10 and S14.

Functionally, binds the lower part of the 30S subunit head. Binds mRNA in the 70S ribosome, positioning it for translation. The protein is Small ribosomal subunit protein uS3 of Paracoccus denitrificans (strain Pd 1222).